A 72-amino-acid chain; its full sequence is DNA-directed RNA polymerase subunit omega (72 aa).

Belongs to the RNA polymerase subunit omega family. The RNAP catalytic core consists of 2 alpha, 1 beta, 1 beta' and 1 omega subunit. When a sigma factor is associated with the core the holoenzyme is formed, which can initiate transcription.

It catalyses the reaction RNA(n) + a ribonucleoside 5'-triphosphate = RNA(n+1) + diphosphate. Promotes RNA polymerase assembly. Latches the N- and C-terminal regions of the beta' subunit thereby facilitating its interaction with the beta and alpha subunits. The sequence is that of DNA-directed RNA polymerase subunit omega from Limosilactobacillus reuteri (strain DSM 20016) (Lactobacillus reuteri).